Consider the following 1627-residue polypeptide: Pappalysin-1 (1627 aa).

The signal sequence occupies residues Met-1–Ala-22. Positions Glu-23–Arg-81 are excised as a propeptide. The segment at Glu-23–Phe-99 is disordered. A compositionally biased stretch (low complexity) spans Ala-42–Ala-51. 17 disulfides stabilise this stretch: Cys-144–Cys-235, Cys-327–Cys-622, Cys-332–Cys-657, Cys-414–Cys-428, Cys-424–Cys-440, Cys-457–Cys-473, Cys-474–Cys-485, Cys-583–Cys-600, Cys-587–Cys-612, Cys-710–Cys-878, Cys-713–Cys-881, Cys-753–Cys-835, Cys-775–Cys-781, Cys-947–Cys-975, Cys-960–Cys-971, Cys-983–Cys-990, and Cys-999–Cys-1011. A metalloprotease region spans residues Met-272–Cys-583. N-linked (GlcNAc...) asparagine glycans are attached at residues Asn-390 and Asn-402. Asn-429 is a glycosylation site (N-linked (GlcNAc...) asparagine). N-linked (GlcNAc...) asparagine glycosylation occurs at Asn-480. His-562 contacts Zn(2+). The active site involves Glu-563. Zn(2+) is bound by residues His-566 and His-572. N-linked (GlcNAc...) asparagine glycosylation is found at Asn-601, Asn-619, and Asn-725. Positions Ser-733 to Lys-754 are disordered. A compositionally biased stretch (basic and acidic residues) spans Ser-739–Gln-751. N-linked (GlcNAc...) asparagine glycosylation is present at Asn-825. A glycan (N-linked (GlcNAc...) asparagine) is linked at Asn-1026. Cystine bridges form between Cys-1036-Cys-1070, Cys-1051-Cys-1139, Cys-1192-Cys-1205, Cys-1215-Cys-1269, Cys-1227-Cys-1238, Cys-1242-Cys-1280, Cys-1285-Cys-1329, Cys-1300-Cys-1310, Cys-1314-Cys-1342, Cys-1346-Cys-1399, Cys-1362-Cys-1373, Cys-1377-Cys-1410, Cys-1415-Cys-1458, Cys-1428-Cys-1438, Cys-1442-Cys-1471, Cys-1478-Cys-1539, Cys-1492-Cys-1502, Cys-1506-Cys-1554, and Cys-1558-Cys-1576. Sushi domains are found at residues Thr-1213–Pro-1282, Val-1283–Leu-1344, Met-1345–Pro-1412, Val-1413–Glu-1473, and Gly-1476–Lys-1556. 2 N-linked (GlcNAc...) asparagine glycosylation sites follow: Asn-1222 and Asn-1226. N-linked (GlcNAc...) asparagine glycosylation occurs at Asn-1323. An N-linked (GlcNAc...) asparagine glycan is attached at Asn-1465. An N-linked (GlcNAc...) asparagine glycan is attached at Asn-1519.

The protein belongs to the peptidase M43B family. In terms of assembly, homodimer; disulfide-linked. In pregnancy serum, predominantly found as a disulfide-linked 2:2 heterotetramer with the proform of PRG2. The cofactor is Zn(2+). In terms of processing, there appear to be no free sulfhydryl groups. High levels in placenta and pregnancy serum. In placenta, expressed in X cells in septa and anchoring villi, and in syncytiotrophoblasts in the chorionic villi. Lower levels are found in a variety of other tissues including kidney, myometrium, endometrium, ovaries, breast, prostate, bone marrow, colon, fibroblasts and osteoblasts.

The protein localises to the secreted. It carries out the reaction Cleavage of the 135-Met-|-Lys-136 bond in insulin-like growth factor binding protein (IGFBP)-4, and the 143-Ser-|-Lys-144 bond in IGFBP-5.. With respect to regulation, inhibited by complexation with the proform of PRG2. Metalloproteinase which specifically cleaves IGFBP-4 and IGFBP-5, resulting in release of bound IGF. Cleavage of IGFBP-4 is dramatically enhanced by the presence of IGF, whereas cleavage of IGFBP-5 is slightly inhibited by the presence of IGF. This is Pappalysin-1 (PAPPA) from Homo sapiens (Human).